We begin with the raw amino-acid sequence, 154 residues long: Ribonuclease 1 (154 aa).

It belongs to the BetVI family.

The protein resides in the cytoplasm. Catalyzes the two-stage endonucleolytic cleavage to 3'-phosphomononucleotides and 3'-phosphooligonucleotides with 2',3'-cyclic phosphate intermediates. In Panax ginseng (Korean ginseng), this protein is Ribonuclease 1.